The sequence spans 194 residues: uncharacterized protein (194 aa).

Positions 62–93 are disordered; sequence GGAGRRTSKAQRVHPQPSHQRQPPPPQHPGPY.

Expressed most abundantly in the brain at protein level. Present in cortex, cerebellum and midbrain. Found in neurons. Elevated expressions detected in Alzheimer brain samples. Also expressed in testis.

It localises to the cytoplasm. This is an uncharacterized protein from Homo sapiens (Human).